Here is a 724-residue protein sequence, read N- to C-terminus: MLMWPQPHLPTHPHLPTHPHLPTHPHLPTHPHLPTHPMMSKETRQSKLAEAKEQLTDHHPQTNPSVGTAASDTKKKKINNGTNPETTTSGGCHSPEDEQKASHQHQEALRRELEAQVHTIRILTCQKTELQMALYYSQHAVKQLEGEARDLISRLHDSWKFAGELEQALSAVATQKKKADRYIEELTKERDALSLELYRNTITDEELKEKNAELQEKLQLVESEKSEIQLNVKELKRKLERAKLLLPQQQLQAEADHLGKELQSVSAKLQAQVEENELWNRLNQQQEEKMWRQEEKIQEWEEKIQEQEEKIREQEEKIREQEEKMRRQEEMMWEKEEKMRRQEEMMWEKEEKMRRQEEMMWEKEEKIRELEEKMHEQEKIREQEEKRQEEEKIREQEKRQEQEAKMWRQEEKIREQEEKIREQEKKMWRQEEKIHEQEKIREEEKRQEQEEMWRQEEKIREQEEIWRQKEKMHEQEEKIRKQEEKVWRQEEKIREQEEKIREQEEKMWRQEEKIREQEEMWREEEKMHEQEKIWEEEKRQEQEDKMWRQEEKIREQEEKVWRQEEKIREQEEKRQEQEEKMWKQEEKIREQEEKIREQEEKIREQEEKIREQEEMTQEQEEKMGEQEEKMCEQEEKMQEQEETMWRQEEKIREQEKKIREQEEKIREQEEMMQEQEEKMWEQEEKMCEQEEKMQEQEEKMRRQEEKMWEQEVRLRQQEEKMQEH.

Disordered stretches follow at residues 1–108 (MLMW…HQEA), 314–342 (QEEK…MRRQ), 374–454 (MHEQ…EMWR), 517–548 (QEEM…KMWR), and 561–724 (WRQE…MQEH). Basic residues predominate over residues 15–29 (LPTHPHLPTHPHLPT). Basic and acidic residues predominate over residues 39-60 (MSKETRQSKLAEAKEQLTDHHP). Composition is skewed to polar residues over residues 61-71 (QTNPSVGTAAS) and 79-91 (NNGT…TSGG). The span at 94–108 (SPEDEQKASHQHQEA) shows a compositional bias: basic and acidic residues. Residues 164–686 (ELEQALSAVA…EKMWEQEEKM (523 aa)) adopt a coiled-coil conformation.

This sequence belongs to the GOLGA6 family.

This Homo sapiens (Human) protein is Golgin subfamily A member 6-like protein 6 (GOLGA6L6).